The primary structure comprises 289 residues: 4-hydroxy-3-methylbut-2-enyl diphosphate reductase (289 aa).

Cys13 is a binding site for [4Fe-4S] cluster. His42 and His76 together coordinate (2E)-4-hydroxy-3-methylbut-2-enyl diphosphate. Dimethylallyl diphosphate-binding residues include His42 and His76. Residues His42 and His76 each contribute to the isopentenyl diphosphate site. Cys98 provides a ligand contact to [4Fe-4S] cluster. Residue His130 coordinates (2E)-4-hydroxy-3-methylbut-2-enyl diphosphate. Position 130 (His130) interacts with dimethylallyl diphosphate. His130 is an isopentenyl diphosphate binding site. Glu132 (proton donor) is an active-site residue. Residue Thr168 participates in (2E)-4-hydroxy-3-methylbut-2-enyl diphosphate binding. Cys199 provides a ligand contact to [4Fe-4S] cluster. Residues Ser227, Ser228, Asn229, and Ser272 each contribute to the (2E)-4-hydroxy-3-methylbut-2-enyl diphosphate site. Positions 227, 228, 229, and 272 each coordinate dimethylallyl diphosphate. 4 residues coordinate isopentenyl diphosphate: Ser227, Ser228, Asn229, and Ser272.

This sequence belongs to the IspH family. Requires [4Fe-4S] cluster as cofactor.

The catalysed reaction is isopentenyl diphosphate + 2 oxidized [2Fe-2S]-[ferredoxin] + H2O = (2E)-4-hydroxy-3-methylbut-2-enyl diphosphate + 2 reduced [2Fe-2S]-[ferredoxin] + 2 H(+). The enzyme catalyses dimethylallyl diphosphate + 2 oxidized [2Fe-2S]-[ferredoxin] + H2O = (2E)-4-hydroxy-3-methylbut-2-enyl diphosphate + 2 reduced [2Fe-2S]-[ferredoxin] + 2 H(+). It functions in the pathway isoprenoid biosynthesis; dimethylallyl diphosphate biosynthesis; dimethylallyl diphosphate from (2E)-4-hydroxy-3-methylbutenyl diphosphate: step 1/1. It participates in isoprenoid biosynthesis; isopentenyl diphosphate biosynthesis via DXP pathway; isopentenyl diphosphate from 1-deoxy-D-xylulose 5-phosphate: step 6/6. In terms of biological role, catalyzes the conversion of 1-hydroxy-2-methyl-2-(E)-butenyl 4-diphosphate (HMBPP) into a mixture of isopentenyl diphosphate (IPP) and dimethylallyl diphosphate (DMAPP). Acts in the terminal step of the DOXP/MEP pathway for isoprenoid precursor biosynthesis. The chain is 4-hydroxy-3-methylbut-2-enyl diphosphate reductase from Porphyromonas gingivalis (strain ATCC BAA-308 / W83).